Here is a 402-residue protein sequence, read N- to C-terminus: Putative cystathionine beta-lyase (402 aa).

Lys236 is modified (N6-(pyridoxal phosphate)lysine).

Belongs to the class-II pyridoxal-phosphate-dependent aminotransferase family. MalY/PatB cystathionine beta-lyase subfamily. The cofactor is pyridoxal 5'-phosphate.

It catalyses the reaction L,L-cystathionine + H2O = L-homocysteine + pyruvate + NH4(+). The catalysed reaction is an S-substituted L-cysteine + H2O = a thiol + pyruvate + NH4(+). It functions in the pathway amino-acid biosynthesis; L-methionine biosynthesis via de novo pathway; L-homocysteine from L-cystathionine: step 1/1. The chain is Putative cystathionine beta-lyase from Mycobacterium leprae (strain TN).